A 96-amino-acid chain; its full sequence is Beta-defensin 20 (96 aa).

Residues 1 to 21 (MKLLQVLLVLLFVALADGAQP) form the signal peptide. 3 disulfides stabilise this stretch: cysteine 24-cysteine 52, cysteine 32-cysteine 46, and cysteine 36-cysteine 53.

This sequence belongs to the beta-defensin family.

Its subcellular location is the secreted. Has antibacterial activity. The polypeptide is Beta-defensin 20 (Defb20) (Mus musculus (Mouse)).